Consider the following 137-residue polypeptide: Large ribosomal subunit protein uL16 (137 aa).

Belongs to the universal ribosomal protein uL16 family. Part of the 50S ribosomal subunit.

Its function is as follows. Binds 23S rRNA and is also seen to make contacts with the A and possibly P site tRNAs. This is Large ribosomal subunit protein uL16 from Pseudomonas putida (strain ATCC 47054 / DSM 6125 / CFBP 8728 / NCIMB 11950 / KT2440).